The sequence spans 345 residues: OVARIAN TUMOR DOMAIN-containing deubiquitinating enzyme 9 (345 aa).

Positions 204-328 (LVENKIEGDG…EVHYNSIYPE (125 aa)) constitute an OTU domain. Aspartate 212 is a catalytic residue. Cysteine 215 (nucleophile) is an active-site residue. Histidine 321 is a catalytic residue.

This sequence belongs to the peptidase C85 family.

The catalysed reaction is Thiol-dependent hydrolysis of ester, thioester, amide, peptide and isopeptide bonds formed by the C-terminal Gly of ubiquitin (a 76-residue protein attached to proteins as an intracellular targeting signal).. In terms of biological role, hydrolase that can remove conjugated ubiquitin from proteins in vitro and may therefore play an important regulatory role at the level of protein turnover by preventing degradation. Cysteine protease with a preference for 'Lys-63' and 'Lys-48' -linked ubiquitin (UB) tetramers as substrates. Also cleaves RUB-GST fusion. This chain is OVARIAN TUMOR DOMAIN-containing deubiquitinating enzyme 9, found in Arabidopsis thaliana (Mouse-ear cress).